Here is a 629-residue protein sequence, read N- to C-terminus: Dihydroxy-acid dehydratase 2 (629 aa).

Residue D82 participates in Mg(2+) binding. C123 is a binding site for [2Fe-2S] cluster. Residues D124 and K125 each coordinate Mg(2+). K125 is modified (N6-carboxylysine). C197 is a binding site for [2Fe-2S] cluster. E493 contributes to the Mg(2+) binding site. The Proton acceptor role is filled by S519. A disordered region spans residues 603 to 629 (DKGGVRRLPPDELGGPEAAFDTQTRAG).

It belongs to the IlvD/Edd family. Homodimer. The cofactor is [2Fe-2S] cluster. Mg(2+) serves as cofactor.

It catalyses the reaction (2R)-2,3-dihydroxy-3-methylbutanoate = 3-methyl-2-oxobutanoate + H2O. The enzyme catalyses (2R,3R)-2,3-dihydroxy-3-methylpentanoate = (S)-3-methyl-2-oxopentanoate + H2O. It functions in the pathway amino-acid biosynthesis; L-isoleucine biosynthesis; L-isoleucine from 2-oxobutanoate: step 3/4. It participates in amino-acid biosynthesis; L-valine biosynthesis; L-valine from pyruvate: step 3/4. Its function is as follows. Functions in the biosynthesis of branched-chain amino acids. Catalyzes the dehydration of (2R,3R)-2,3-dihydroxy-3-methylpentanoate (2,3-dihydroxy-3-methylvalerate) into 2-oxo-3-methylpentanoate (2-oxo-3-methylvalerate) and of (2R)-2,3-dihydroxy-3-methylbutanoate (2,3-dihydroxyisovalerate) into 2-oxo-3-methylbutanoate (2-oxoisovalerate), the penultimate precursor to L-isoleucine and L-valine, respectively. The sequence is that of Dihydroxy-acid dehydratase 2 from Nocardia farcinica (strain IFM 10152).